A 527-amino-acid polypeptide reads, in one-letter code: Ribosomal protein S6 kinase beta-1 (527 aa).

Residues 1–54 (MRRRRRRDGFYPAPDFRDREAEDMAGVFDIDLDQPEDAGSEDELEEGGQLNESM) are disordered. The TOS motif motif lies at 28–32 (FDIDL). The segment covering 30-46 (IDLDQPEDAGSEDELEE) has biased composition (acidic residues). Positions 91 to 352 (FELLRVLGKG…AGEVQAHPFF (262 aa)) constitute a Protein kinase domain. ATP is bound by residues 97 to 105 (LGKGGYGKV) and Lys123. Asp218 serves as the catalytic Proton acceptor. Residue Thr252 is modified to Phosphothreonine; by PDPK1. In terms of domain architecture, AGC-kinase C-terminal spans 353–423 (RHINWEELLA…VAPSVLESVK (71 aa)). Phosphoserine is present on Ser394. Thr412 bears the Phosphothreonine; by MTOR, NEK6 and NEK7 mark. Residues 424-527 (EKFSFEPKIR…PEHLRMNLEL (104 aa)) form an autoinhibitory domain region. Phosphoserine occurs at positions 434 and 441. Position 444 is a phosphothreonine (Thr444). 2 positions are modified to phosphoserine: Ser447 and Ser452. Lys516 bears the N6-acetyllysine mark.

The protein belongs to the protein kinase superfamily. AGC Ser/Thr protein kinase family. S6 kinase subfamily. In terms of assembly, interacts with PPP1R9A/neurabin-1. Interacts with RPTOR. Interacts with IRS1. Interacts with EIF3B and EIF3C. Interacts with TRAF4. Interacts with POLDIP3. Interacts (via N-terminus) with IER5. Post-translationally, phosphorylation at Thr-412 is regulated by mTORC1. The phosphorylation at this site is maintained by an agonist-dependent autophosphorylation mechanism. Activated by phosphorylation at Thr-252 by PDPK1. Dephosphorylation by PPP1CC at Thr-412 in mitochondrion.

The protein localises to the cytoplasm. The protein resides in the synapse. It is found in the synaptosome. It localises to the mitochondrion outer membrane. Its subcellular location is the mitochondrion. The catalysed reaction is L-seryl-[protein] + ATP = O-phospho-L-seryl-[protein] + ADP + H(+). The enzyme catalyses L-threonyl-[protein] + ATP = O-phospho-L-threonyl-[protein] + ADP + H(+). Inactivated by binding to URI1. Activation requires multiple phosphorylation events on serine/threonine residues. Activation appears to be first mediated by phosphorylation of multiple sites in the autoinhibitory domain, which facilitates phosphorylation at Thr-412, disrupting the autoinhibitory mechanism and allowing phosphorylation of Thr-252 by PDPK1. The active conformation of the kinase is believed to be stabilized by a mechanism involving three conserved phosphorylation sites located in the kinase domain activation loop (Thr-252) and in the AGC-kinase C-terminal domain (Ser-394 in the middle of the tail/linker region and Thr-412 within a hydrophobic motif at its end). Activated by mTORC1; isoform Alpha I and isoform Alpha II are sensitive to rapamycin, which inhibits activating phosphorylation at Thr-412. Activated by PDPK1. In terms of biological role, serine/threonine-protein kinase that acts downstream of mTOR signaling in response to growth factors and nutrients to promote cell proliferation, cell growth and cell cycle progression. Regulates protein synthesis through phosphorylation of EIF4B, RPS6 and EEF2K, and contributes to cell survival by repressing the pro-apoptotic function of BAD. Under conditions of nutrient depletion, the inactive form associates with the EIF3 translation initiation complex. Upon mitogenic stimulation, phosphorylation by the mechanistic target of rapamycin complex 1 (mTORC1) leads to dissociation from the EIF3 complex and activation. The active form then phosphorylates and activates several substrates in the pre-initiation complex, including the EIF2B complex and the cap-binding complex component EIF4B. Also controls translation initiation by phosphorylating a negative regulator of EIF4A, PDCD4, targeting it for ubiquitination and subsequent proteolysis. Promotes initiation of the pioneer round of protein synthesis by phosphorylating POLDIP3/SKAR. In response to IGF1, activates translation elongation by phosphorylating EEF2 kinase (EEF2K), which leads to its inhibition and thus activation of EEF2. Also plays a role in feedback regulation of mTORC2 by mTORC1 by phosphorylating MAPKAP1/SIN1, MTOR and RICTOR, resulting in the inhibition of mTORC2 and AKT1 signaling. Also involved in feedback regulation of mTORC1 and mTORC2 by phosphorylating DEPTOR. Mediates cell survival by phosphorylating the pro-apoptotic protein BAD and suppressing its pro-apoptotic function. Phosphorylates mitochondrial URI1 leading to dissociation of a URI1-PPP1CC complex. The free mitochondrial PPP1CC can then dephosphorylate RPS6KB1 at Thr-412, which is proposed to be a negative feedback mechanism for the RPS6KB1 anti-apoptotic function. Mediates TNF-alpha-induced insulin resistance by phosphorylating IRS1 at multiple serine residues, resulting in accelerated degradation of IRS1. In cells lacking functional TSC1-2 complex, constitutively phosphorylates and inhibits GSK3B. May be involved in cytoskeletal rearrangement through binding to neurabin. Phosphorylates and activates the pyrimidine biosynthesis enzyme CAD, downstream of MTOR. Following activation by mTORC1, phosphorylates EPRS and thereby plays a key role in fatty acid uptake by adipocytes and also most probably in interferon-gamma-induced translation inhibition. In Bos taurus (Bovine), this protein is Ribosomal protein S6 kinase beta-1 (RPS6KB1).